Here is a 518-residue protein sequence, read N- to C-terminus: MSPIALLSVSDKTGLIPLAKALVNELGFKIISSGGTAKLIESENLPVTRVADYTGFPEILGGRVKTLNPKIHGGILARRDKQSHLDDLDKQNINPIDLVVVNLYPFVKTISKENVSWEEAIENIDIGGPTMIRAAAKNHQDVLVVTDPSQYSNLIDAYKSKKITPELRKKYSQQAFEHTATYDLTISNWIANQSSSKKVSWLQSLPLKQELRYGENPHQKASWYGEPEKGWSGANQLQGKELSTNNLLDLEAALSTLREFGYKNTISNPSYQKAAVVIKHTNPCGVAIGDSPSSALKRALDGDRVSAFGGIIAINCPVDEAAAKEIENIFIECVVAPYFDETAKEILSKKKNLRLLELKAESVQKADKNHIRSILGGLLIQDLDEPSIDQKKWKSVTELIPTDEEMNDLSFAWKIVKHIRSNAIAVASNQQSLGIGAGQMNRVGSAKLALEAAGTKSKGAVLASDGFFPFDDTVKMASDYGISSIIQPGGSIRDEDSIKACNELGIKMILTGKRHFLH.

Positions 1 to 146 (MSPIALLSVS…KNHQDVLVVT (146 aa)) constitute an MGS-like domain.

This sequence belongs to the PurH family.

It carries out the reaction (6R)-10-formyltetrahydrofolate + 5-amino-1-(5-phospho-beta-D-ribosyl)imidazole-4-carboxamide = 5-formamido-1-(5-phospho-D-ribosyl)imidazole-4-carboxamide + (6S)-5,6,7,8-tetrahydrofolate. The enzyme catalyses IMP + H2O = 5-formamido-1-(5-phospho-D-ribosyl)imidazole-4-carboxamide. Its pathway is purine metabolism; IMP biosynthesis via de novo pathway; 5-formamido-1-(5-phospho-D-ribosyl)imidazole-4-carboxamide from 5-amino-1-(5-phospho-D-ribosyl)imidazole-4-carboxamide (10-formyl THF route): step 1/1. The protein operates within purine metabolism; IMP biosynthesis via de novo pathway; IMP from 5-formamido-1-(5-phospho-D-ribosyl)imidazole-4-carboxamide: step 1/1. This Prochlorococcus marinus (strain NATL1A) protein is Bifunctional purine biosynthesis protein PurH.